The primary structure comprises 573 residues: Sulfite reductase [NADPH] hemoprotein beta-component (573 aa).

4 residues coordinate [4Fe-4S] cluster: C436, C442, C481, and C485. C485 is a binding site for siroheme.

Belongs to the nitrite and sulfite reductase 4Fe-4S domain family. In terms of assembly, alpha(8)-beta(8). The alpha component is a flavoprotein, the beta component is a hemoprotein. Requires siroheme as cofactor. It depends on [4Fe-4S] cluster as a cofactor.

It carries out the reaction hydrogen sulfide + 3 NADP(+) + 3 H2O = sulfite + 3 NADPH + 4 H(+). It functions in the pathway sulfur metabolism; hydrogen sulfide biosynthesis; hydrogen sulfide from sulfite (NADPH route): step 1/1. Its function is as follows. Component of the sulfite reductase complex that catalyzes the 6-electron reduction of sulfite to sulfide. This is one of several activities required for the biosynthesis of L-cysteine from sulfate. In Alteromonas mediterranea (strain DSM 17117 / CIP 110805 / LMG 28347 / Deep ecotype), this protein is Sulfite reductase [NADPH] hemoprotein beta-component.